The following is a 311-amino-acid chain: Ribosomal RNA small subunit methyltransferase H (311 aa).

Residues 34–36, Asp54, Phe80, Asp104, and Gln111 contribute to the S-adenosyl-L-methionine site; that span reads GGH.

It belongs to the methyltransferase superfamily. RsmH family.

The protein resides in the cytoplasm. It carries out the reaction cytidine(1402) in 16S rRNA + S-adenosyl-L-methionine = N(4)-methylcytidine(1402) in 16S rRNA + S-adenosyl-L-homocysteine + H(+). In terms of biological role, specifically methylates the N4 position of cytidine in position 1402 (C1402) of 16S rRNA. The polypeptide is Ribosomal RNA small subunit methyltransferase H (Teredinibacter turnerae (strain ATCC 39867 / T7901)).